The primary structure comprises 482 residues: Glycogen synthase (482 aa).

Residue Lys-20 participates in ADP-alpha-D-glucose binding.

It belongs to the glycosyltransferase 1 family. Bacterial/plant glycogen synthase subfamily.

The enzyme catalyses [(1-&gt;4)-alpha-D-glucosyl](n) + ADP-alpha-D-glucose = [(1-&gt;4)-alpha-D-glucosyl](n+1) + ADP + H(+). The protein operates within glycan biosynthesis; glycogen biosynthesis. In terms of biological role, synthesizes alpha-1,4-glucan chains using ADP-glucose. This Aliivibrio salmonicida (strain LFI1238) (Vibrio salmonicida (strain LFI1238)) protein is Glycogen synthase.